A 350-amino-acid polypeptide reads, in one-letter code: Holliday junction branch migration complex subunit RuvB (350 aa).

A large ATPase domain (RuvB-L) region spans residues 1 to 182 (MEDRIVTPLN…FGVLCPMDFY (182 aa)). Residues Leu-21, Arg-22, Gly-63, Lys-66, Thr-67, Thr-68, 129–131 (EDY), Arg-172, Tyr-182, and Arg-219 contribute to the ATP site. Thr-67 serves as a coordination point for Mg(2+). The small ATPAse domain (RuvB-S) stretch occupies residues 183 to 253 (DQEELSEIVV…TSKAALELLE (71 aa)). A head domain (RuvB-H) region spans residues 256–350 (KEGFDSIDNK…KQSSLFDGEV (95 aa)). The DNA site is built by Arg-311 and Arg-316.

Belongs to the RuvB family. As to quaternary structure, homohexamer. Forms an RuvA(8)-RuvB(12)-Holliday junction (HJ) complex. HJ DNA is sandwiched between 2 RuvA tetramers; dsDNA enters through RuvA and exits via RuvB. An RuvB hexamer assembles on each DNA strand where it exits the tetramer. Each RuvB hexamer is contacted by two RuvA subunits (via domain III) on 2 adjacent RuvB subunits; this complex drives branch migration. In the full resolvosome a probable DNA-RuvA(4)-RuvB(12)-RuvC(2) complex forms which resolves the HJ.

It is found in the cytoplasm. The enzyme catalyses ATP + H2O = ADP + phosphate + H(+). In terms of biological role, the RuvA-RuvB-RuvC complex processes Holliday junction (HJ) DNA during genetic recombination and DNA repair, while the RuvA-RuvB complex plays an important role in the rescue of blocked DNA replication forks via replication fork reversal (RFR). RuvA specifically binds to HJ cruciform DNA, conferring on it an open structure. The RuvB hexamer acts as an ATP-dependent pump, pulling dsDNA into and through the RuvAB complex. RuvB forms 2 homohexamers on either side of HJ DNA bound by 1 or 2 RuvA tetramers; 4 subunits per hexamer contact DNA at a time. Coordinated motions by a converter formed by DNA-disengaged RuvB subunits stimulates ATP hydrolysis and nucleotide exchange. Immobilization of the converter enables RuvB to convert the ATP-contained energy into a lever motion, pulling 2 nucleotides of DNA out of the RuvA tetramer per ATP hydrolyzed, thus driving DNA branch migration. The RuvB motors rotate together with the DNA substrate, which together with the progressing nucleotide cycle form the mechanistic basis for DNA recombination by continuous HJ branch migration. Branch migration allows RuvC to scan DNA until it finds its consensus sequence, where it cleaves and resolves cruciform DNA. The protein is Holliday junction branch migration complex subunit RuvB of Clostridium kluyveri (strain NBRC 12016).